Reading from the N-terminus, the 373-residue chain is Probable tRNA sulfurtransferase (373 aa).

A THUMP domain is found at asparagine 54–isoleucine 158. Residues leucine 176–phenylalanine 177, asparagine 201–phenylalanine 202, lysine 256, glycine 278, and glutamine 287 each bind ATP.

It belongs to the ThiI family.

It is found in the cytoplasm. The catalysed reaction is [ThiI sulfur-carrier protein]-S-sulfanyl-L-cysteine + a uridine in tRNA + 2 reduced [2Fe-2S]-[ferredoxin] + ATP + H(+) = [ThiI sulfur-carrier protein]-L-cysteine + a 4-thiouridine in tRNA + 2 oxidized [2Fe-2S]-[ferredoxin] + AMP + diphosphate. It catalyses the reaction [ThiS sulfur-carrier protein]-C-terminal Gly-Gly-AMP + S-sulfanyl-L-cysteinyl-[cysteine desulfurase] + AH2 = [ThiS sulfur-carrier protein]-C-terminal-Gly-aminoethanethioate + L-cysteinyl-[cysteine desulfurase] + A + AMP + 2 H(+). Its pathway is cofactor biosynthesis; thiamine diphosphate biosynthesis. Its function is as follows. Catalyzes the ATP-dependent transfer of a sulfur to tRNA to produce 4-thiouridine in position 8 of tRNAs, which functions as a near-UV photosensor. Also catalyzes the transfer of sulfur to the sulfur carrier protein ThiS, forming ThiS-thiocarboxylate. This is a step in the synthesis of thiazole, in the thiamine biosynthesis pathway. The sulfur is donated as persulfide by IscS. In Saccharolobus islandicus (strain Y.N.15.51 / Yellowstone #2) (Sulfolobus islandicus), this protein is Probable tRNA sulfurtransferase.